Reading from the N-terminus, the 357-residue chain is Protein-L-isoaspartate O-methyltransferase domain-containing protein 1 (357 aa).

G2 carries N-myristoyl glycine lipidation. The active site involves S64. AdoMet binding motif stretches follow at residues 85–94, 160–164, and 181–191; these read LNLGSGTGYL, YDRIY, and LKVGGILVMPI. The tract at residues 240-250 is BC-box; that stretch reads VRNLQDLARIY. Residues 299 to 333 are disordered; it reads PLDSEEDEKMEEDNKEEEEKDHNEAMKPEEPPQNL. Acidic residues predominate over residues 301–317; it reads DSEEDEKMEEDNKEEEE. Basic and acidic residues predominate over residues 318–333; the sequence is KDHNEAMKPEEPPQNL. Positions 341 to 344 are CUL-box; that stretch reads LPLP.

Belongs to the methyltransferase superfamily. L-isoaspartyl/D-aspartyl protein methyltransferase family. In terms of assembly, component of the probable ECS(PCMTD1) E3 ubiquitin-protein ligase complex, at least composed of CUL5, ELOB, ELOC, RBX2 and PCMTD1. Interacts (via the BC-box) with ELOB and ELOC; the interaction is direct and stabilizes PCMTD1.

It localises to the cytoplasm. The protein resides in the membrane. Functionally, substrate recognition component of an ECS (Elongin BC-CUL5-SOCS-box protein) E3 ubiquitin ligase complex which mediates the ubiquitination and subsequent proteasomal degradation of target proteins. Specifically binds to the methyltransferase cofactor S-adenosylmethionine (AdoMet) via the N-terminal AdoMet binding motif, but does not display methyltransferase activity. May provide an alternate maintenance pathway for modified proteins by acting as a damage-specific E3 ubiquitin ligase adaptor protein. In Homo sapiens (Human), this protein is Protein-L-isoaspartate O-methyltransferase domain-containing protein 1.